A 476-amino-acid chain; its full sequence is MKVTLPEFERAGVMVVGDVMLDRYWYGPTSRISPEAPVPVVKVDTIEERPGGAANVAMNIASLGAHSRLVGLTGIDDAARALSKTLADVNVKCDFVSVPTHPTITKLRVLSRNQQLIRLDFEEGFEGVDPEPMHERIAQALGSIGALVLSDYAKGALASVQQMIQLARKAGVPVLIDPKGTEFERYRGATLLTPNLSEFEAVAGKCKNEEEIVERGMKIIADFDFSALLVTRSEQGMTLLQPGKPPLHMPTQAQEVYDVTGAGDTVIGVLAATLAAGNSLEEACYFANAAAGVVVGKLGTSTVSPIELENAVRGRADTGFGVMREDELKVAVAAARKRGEKVVMTNGVFDILHAGHVSYLANARKLGDRLIVAVNSDASTKRLKGETRPVNPLEQRMIVLGALEAVDWVVSFEEDTPQRLIAGILPDLLVKGGDYKPEQIAGSEEVWANGGDVMVLNFEDGCSTTNIIKKIQKDSQ.

A ribokinase region spans residues 1–318 (MKVTLPEFER…ENAVRGRADT (318 aa)). 195–198 (NLSE) serves as a coordination point for ATP. D264 is a catalytic residue. A cytidylyltransferase region spans residues 344 to 476 (MTNGVFDILH…IIKKIQKDSQ (133 aa)).

It in the N-terminal section; belongs to the carbohydrate kinase PfkB family. This sequence in the C-terminal section; belongs to the cytidylyltransferase family. In terms of assembly, homodimer.

The enzyme catalyses D-glycero-beta-D-manno-heptose 7-phosphate + ATP = D-glycero-beta-D-manno-heptose 1,7-bisphosphate + ADP + H(+). The catalysed reaction is D-glycero-beta-D-manno-heptose 1-phosphate + ATP + H(+) = ADP-D-glycero-beta-D-manno-heptose + diphosphate. It functions in the pathway nucleotide-sugar biosynthesis; ADP-L-glycero-beta-D-manno-heptose biosynthesis; ADP-L-glycero-beta-D-manno-heptose from D-glycero-beta-D-manno-heptose 7-phosphate: step 1/4. Its pathway is nucleotide-sugar biosynthesis; ADP-L-glycero-beta-D-manno-heptose biosynthesis; ADP-L-glycero-beta-D-manno-heptose from D-glycero-beta-D-manno-heptose 7-phosphate: step 3/4. Catalyzes the phosphorylation of D-glycero-D-manno-heptose 7-phosphate at the C-1 position to selectively form D-glycero-beta-D-manno-heptose-1,7-bisphosphate. In terms of biological role, catalyzes the ADP transfer from ATP to D-glycero-beta-D-manno-heptose 1-phosphate, yielding ADP-D-glycero-beta-D-manno-heptose. The polypeptide is Bifunctional protein HldE (Enterobacter sp. (strain 638)).